A 399-amino-acid polypeptide reads, in one-letter code: MLNIIKSKLNTTYKKKGLNDSSIAIYNRDVIPAVRNWKSSIYAYNKNAINLIPIKSKYVMKLIKAYFNLYNLQLESLLRKNRLRRRFRKISTNRIFISDGEFKHTNDKVNITLYVYNKQKLNYLLKLKKRYLTLFKKAKFARKLKLIKNVGLNILCKHKQKSILLSNLLPKYNTQVNTAQNIYYTRFIKKSFKRLKFYMYYKQMLYINKAKFENTYLQGLINLVRNIFNKNVEFNIINLKYFYFNSKIFTQPLELKLKKKRNVLRYLKVLIRKAKIKNVKLAEKSKKFFNFNIFNSDNFLQQDNTKSKYLKKIILSNLKYKRVSGVRLEAAGRLTRRFSASRSQRRTKYKGNLENVYSSFKGYPTPVLRGNDKANLQYTVINSTSRVGAFGVKGWISST.

The protein belongs to the universal ribosomal protein uS3 family.

The protein localises to the mitochondrion. Functionally, essential for mitochondrial protein synthesis and required for the maturation of small ribosomal subunits. This Penicillium urticae protein is Small ribosomal subunit protein uS3m.